The chain runs to 60 residues: MAKVKVTLIRSVTHRQPTQRRTVKALGLGKLHSSVILPDNAATRGAIFKVAHLVSIEEVK.

Belongs to the universal ribosomal protein uL30 family. Part of the 50S ribosomal subunit.

This Limosilactobacillus fermentum (strain NBRC 3956 / LMG 18251) (Lactobacillus fermentum) protein is Large ribosomal subunit protein uL30.